Reading from the N-terminus, the 1909-residue chain is Nck-associated protein 5 (1909 aa).

Positions 71-253 form a coiled coil; sequence EKLIHELEEE…DLEQQNRTLS (183 aa). 8 disordered regions span residues 351 to 370, 736 to 819, 855 to 997, 1026 to 1469, 1486 to 1509, 1541 to 1592, 1725 to 1750, and 1763 to 1885; these read SSYT…SQNW, EEDT…LMEP, PLFE…KKPS, SSSF…APLS, KGQV…FASW, GFGN…RTPQ, FPLP…DAEP, and SMRA…DYGD. The segment covering 736-748 has biased composition (basic and acidic residues); the sequence is EEDTEKNIPKDNV. Polar residues-rich tracts occupy residues 753–789, 950–965, 981–990, and 1066–1084; these read RVST…SRSS, APSS…SETA, VISSNPATTE, and PRIS…SKSV. 2 stretches are compositionally biased toward low complexity: residues 1110-1131 and 1178-1187; these read SPSS…HNSP and ASKSSVAVNK. Positions 1241-1250 are enriched in basic and acidic residues; it reads DGRDGVDNRS. A compositionally biased stretch (polar residues) spans 1300 to 1325; the sequence is QIITNTAERGNSLTRQNSSTESSPNK. The span at 1339–1366 shows a compositional bias: low complexity; it reads GRPSGHPSSGKGSLGSSGSFSSQHGSPS. A compositionally biased stretch (polar residues) spans 1428–1446; sequence PGRTQHPSTFETSSTSKLE. Positions 1454–1466 are enriched in low complexity; sequence ASATATDAVSSEA. 2 stretches are compositionally biased toward basic and acidic residues: residues 1547–1560 and 1567–1576; these read LKSE…KPEL and ELIKDTKSAD. Over residues 1869–1878 the composition is skewed to polar residues; that stretch reads YSASGGSNSD.

As to quaternary structure, interacts with the SH3-containing region of the adapter protein NCK. In terms of tissue distribution, expressed in fetal and adult brain, leukocytes and fetal fibroblasts.

This chain is Nck-associated protein 5 (NCKAP5), found in Homo sapiens (Human).